The chain runs to 332 residues: Anthranilate phosphoribosyltransferase (332 aa).

5-phospho-alpha-D-ribose 1-diphosphate-binding positions include glycine 79, 82-83, serine 87, 89-92, 107-115, and serine 119; these read GD, NIST, and KHGNRSVSS. Glycine 79 is an anthranilate binding site. Residue serine 91 coordinates Mg(2+). Asparagine 110 is an anthranilate binding site. Arginine 165 contributes to the anthranilate binding site. Residues aspartate 223 and glutamate 224 each coordinate Mg(2+).

It belongs to the anthranilate phosphoribosyltransferase family. As to quaternary structure, homodimer. Mg(2+) serves as cofactor.

The catalysed reaction is N-(5-phospho-beta-D-ribosyl)anthranilate + diphosphate = 5-phospho-alpha-D-ribose 1-diphosphate + anthranilate. It functions in the pathway amino-acid biosynthesis; L-tryptophan biosynthesis; L-tryptophan from chorismate: step 2/5. In terms of biological role, catalyzes the transfer of the phosphoribosyl group of 5-phosphorylribose-1-pyrophosphate (PRPP) to anthranilate to yield N-(5'-phosphoribosyl)-anthranilate (PRA). The sequence is that of Anthranilate phosphoribosyltransferase from Yersinia pseudotuberculosis serotype O:3 (strain YPIII).